A 425-amino-acid chain; its full sequence is 2-methylserine hydroxymethyltransferase (425 aa).

(6S)-5,6,7,8-tetrahydrofolate contacts are provided by residues Leu126 and 130-132; that span reads GHL. Lys235 carries the post-translational modification N6-(pyridoxal phosphate)lysine.

Belongs to the SHMT family. In terms of assembly, homodimer. It depends on pyridoxal 5'-phosphate as a cofactor.

It is found in the cytoplasm. It catalyses the reaction (6R)-5,10-methylene-5,6,7,8-tetrahydrofolate + D-alanine + H2O = 2-methylserine + (6S)-5,6,7,8-tetrahydrofolate. Its pathway is one-carbon metabolism; tetrahydrofolate interconversion. Functionally, catalyzes the reversible interconversion of alpha-methyl-L-serine to D-alanine with tetrahydrofolate (THF) serving as the one-carbon carrier. Cannot use alpha-methyl-D-serine, L-serine, D-serine or L-alanine. The polypeptide is 2-methylserine hydroxymethyltransferase (Aminobacter sp).